A 374-amino-acid chain; its full sequence is Type IV secretion system protein PtlG (374 aa).

A helical transmembrane segment spans residues 38–56 (WMFALVAVALSCLLATGIW). The disordered stretch occupies residues 86–117 (HPREPEPAPLPDMPAAPDPILPQPRPAPPVPP). Residues 92 to 117 (PAPLPDMPAAPDPILPQPRPAPPVPP) show a composition bias toward pro residues.

The protein belongs to the TrbI/VirB10 family.

It is found in the cell membrane. Functionally, component of the type IV secretion system ptl required for secretion of assembled pertussis toxin (PTX) through the outer membrane. This chain is Type IV secretion system protein PtlG (ptlG), found in Bordetella pertussis (strain Tohama I / ATCC BAA-589 / NCTC 13251).